The sequence spans 870 residues: DNA-directed RNA polymerase subunit Rpo1N (870 aa).

Positions 60, 63, 70, 73, 100, 103, 146, and 149 each coordinate Zn(2+). Residues D451, D453, and D455 each coordinate Mg(2+).

The protein belongs to the RNA polymerase beta' chain family. Part of the RNA polymerase complex. It depends on Mg(2+) as a cofactor. Zn(2+) is required as a cofactor.

The protein localises to the cytoplasm. It carries out the reaction RNA(n) + a ribonucleoside 5'-triphosphate = RNA(n+1) + diphosphate. In terms of biological role, DNA-dependent RNA polymerase (RNAP) catalyzes the transcription of DNA into RNA using the four ribonucleoside triphosphates as substrates. Forms the clamp head domain. The chain is DNA-directed RNA polymerase subunit Rpo1N from Methanothermobacter thermautotrophicus (strain ATCC 29096 / DSM 1053 / JCM 10044 / NBRC 100330 / Delta H) (Methanobacterium thermoautotrophicum).